The primary structure comprises 295 residues: Aspartate carbamoyltransferase catalytic subunit (295 aa).

The carbamoyl phosphate site is built by Arg-54 and Thr-55. L-aspartate is bound at residue Lys-82. Residues Arg-104, His-132, and Gln-135 each contribute to the carbamoyl phosphate site. L-aspartate-binding residues include Arg-165 and Arg-218. Carbamoyl phosphate-binding residues include Gly-257 and Pro-258.

It belongs to the aspartate/ornithine carbamoyltransferase superfamily. ATCase family. Heterododecamer (2C3:3R2) of six catalytic PyrB chains organized as two trimers (C3), and six regulatory PyrI chains organized as three dimers (R2).

The catalysed reaction is carbamoyl phosphate + L-aspartate = N-carbamoyl-L-aspartate + phosphate + H(+). Its pathway is pyrimidine metabolism; UMP biosynthesis via de novo pathway; (S)-dihydroorotate from bicarbonate: step 2/3. Catalyzes the condensation of carbamoyl phosphate and aspartate to form carbamoyl aspartate and inorganic phosphate, the committed step in the de novo pyrimidine nucleotide biosynthesis pathway. This chain is Aspartate carbamoyltransferase catalytic subunit, found in Wolbachia pipientis subsp. Culex pipiens (strain wPip).